The primary structure comprises 1256 residues: MRTRLAGTSEDGHLCPVEAPFPNVDFLLHQQLQQEQDVYANSTTNATASPPIAPTSVLPRPSRPSQSSAAERTSPESPSVRQSPTKRDRNPGPSSISGAGPLNLEHQSPSQQSQNQQQQQQQQQQQQQQQQQQQSFYARSRRSGNFNWKLSHSRNGSIEKPPPSFFSSSFSHSPSTPPLSLGAPANGAAHSKEMEKEEEQKFVGKRPRIRSPWAITFVTLLISILGIGFLALVLNSSFTRHIDPKGCRMSYMRPGYAKFDDFDTEHTRFASKYSLYLYRELGIENDAKVRGVPVLFIPGNAGSYKQVRPIAAEAANYFHDVLQQDESAVKAGARSLDFFTVDFNEDITAFHGQTLLDQAEYLNEAIRYILSLYLDRTRSDRDPNLPDPTSVIVLGHSMGGVVARTMLIMPNYQANSINTIITMSAPHARPPVSFDSEIVKTYKDINDYWRRAYSQQWANNNPLWHVTLVSIAGGGLDTVVPSDYASVESLVPDTHGFTVFTTSIPNVWTSMDHAAILWCDQFRKALVKAIFDVVDVNRAAQTKPRADRMRVFKRWFLTGMEEVAEKTVPSKDPSTLLTLEDNLSSVIAQGERLVLRSLGASGAVRAHLLPIPPSGSPEAKRFTLLTDHKLDVSSESGRLEVLFCSVFPMQPGQAVAGFAAQINLAGDSSASTRLACNNAASDVVTLPASLRSSQYPFSKEGEPPKTHFSYLQYDVEDIAEHQYVAVIEKTHTPTPGFVIAEFSDVSQSHRTRHISLRRLLAFGMKFRLPSSRPMVSELKVPTMQSSLLAYNLEISEQNCGKQQELFAPLIRQYLTEPYESKFFVNAREAAVSIHGVAPYVPPPLKSRSTEDGLSFQFWTDPTCASNINIKMSIDVMGSLGKLYMRYRTVFAAFPLLVVTLVLRKQFRIYDTTGVFISFSESLDLCLRQSIPLVLAFLTFLSLFIWNSSSSATANIWNWANVTSGAIDFHQNDLLIGTQDPFFWFLVPVIGLICVGICTVFNYMTLTLVHILSTAVSLLSFRPGWIRNDERRKALPLPAFYPTSPRRRMVTTAILLVLVSTLIPYQFAYLVCCLVQLTTTVRAQRLASDLRSAANSNFYNYVHSILLLMLWILPINLPILVVWIHNLAVHWLTPFSSHHNVLSIMPFIILVETLTTGKMVPRVNSRFKHFTSVLLFGIALYAAIYGVSYAYMLHYLVNLVAAWLAIVHSTSDNWSVLSGIKHISCTLFDAGNTNNVGGVNGTNNTMLAEDCKMRKEP.

A compositionally biased stretch (polar residues) spans 37-48 (DVYANSTTNATA). Positions 37-203 (DVYANSTTNA…MEKEEEQKFV (167 aa)) are disordered. 2 N-linked (GlcNAc...) asparagine glycosylation sites follow: Asn-41 and Asn-45. The segment covering 59-68 (PRPSRPSQSS) has biased composition (low complexity). The segment covering 69–83 (AAERTSPESPSVRQS) has biased composition (polar residues). The span at 107–135 (QSPSQQSQNQQQQQQQQQQQQQQQQQQQS) shows a compositional bias: low complexity. Positions 143–156 (SGNFNWKLSHSRNG) are enriched in polar residues. An N-linked (GlcNAc...) asparagine glycan is attached at Asn-155. Low complexity predominate over residues 165–180 (FFSSSFSHSPSTPPLS). Over residues 190 to 202 (HSKEMEKEEEQKF) the composition is skewed to basic and acidic residues. The helical transmembrane segment at 214-234 (AITFVTLLISILGIGFLALVL) threads the bilayer. The N-linked (GlcNAc...) asparagine glycan is linked to Asn-235. Ser-397 is a catalytic residue. Residue Asn-582 is glycosylated (N-linked (GlcNAc...) asparagine). Transmembrane regions (helical) follow at residues 882-902 (LYMR…TLVL) and 929-949 (SIPL…NSSS). N-linked (GlcNAc...) asparagine glycosylation is present at Asn-960. The next 6 helical transmembrane spans lie at 980-1000 (PFFW…CTVF), 1005-1025 (LTLV…PGWI), 1053-1073 (ILLV…VCCL), 1103-1123 (SILL…VVWI), 1130-1150 (WLTP…IILV), and 1172-1192 (VLLF…AYML). N-linked (GlcNAc...) asparagine glycosylation is found at Asn-1212, Asn-1239, and Asn-1242.

This sequence belongs to the GPI inositol-deacylase family.

The protein localises to the endoplasmic reticulum membrane. Involved in inositol deacylation of GPI-anchored proteins which plays important roles in the quality control and ER-associated degradation of GPI-anchored proteins. In Neurospora crassa (strain ATCC 24698 / 74-OR23-1A / CBS 708.71 / DSM 1257 / FGSC 987), this protein is GPI inositol-deacylase (bst-1).